A 128-amino-acid polypeptide reads, in one-letter code: Small ribosomal subunit protein uS12 (128 aa).

A 3-methylthioaspartic acid modification is found at D89.

It belongs to the universal ribosomal protein uS12 family. As to quaternary structure, part of the 30S ribosomal subunit. Contacts proteins S8 and S17. May interact with IF1 in the 30S initiation complex.

Functionally, with S4 and S5 plays an important role in translational accuracy. In terms of biological role, interacts with and stabilizes bases of the 16S rRNA that are involved in tRNA selection in the A site and with the mRNA backbone. Located at the interface of the 30S and 50S subunits, it traverses the body of the 30S subunit contacting proteins on the other side and probably holding the rRNA structure together. The combined cluster of proteins S8, S12 and S17 appears to hold together the shoulder and platform of the 30S subunit. This chain is Small ribosomal subunit protein uS12, found in Campylobacter jejuni subsp. jejuni serotype O:6 (strain 81116 / NCTC 11828).